Consider the following 237-residue polypeptide: Aspartate/glutamate leucyltransferase (237 aa).

It belongs to the R-transferase family. Bpt subfamily.

The protein localises to the cytoplasm. The catalysed reaction is N-terminal L-glutamyl-[protein] + L-leucyl-tRNA(Leu) = N-terminal L-leucyl-L-glutamyl-[protein] + tRNA(Leu) + H(+). It catalyses the reaction N-terminal L-aspartyl-[protein] + L-leucyl-tRNA(Leu) = N-terminal L-leucyl-L-aspartyl-[protein] + tRNA(Leu) + H(+). Functionally, functions in the N-end rule pathway of protein degradation where it conjugates Leu from its aminoacyl-tRNA to the N-termini of proteins containing an N-terminal aspartate or glutamate. The polypeptide is Aspartate/glutamate leucyltransferase (Marinobacter nauticus (strain ATCC 700491 / DSM 11845 / VT8) (Marinobacter aquaeolei)).